The sequence spans 206 residues: Uracil phosphoribosyltransferase (206 aa).

Residues Arg-76, Arg-101, and 128 to 136 each bind 5-phospho-alpha-D-ribose 1-diphosphate; that span reads DPMLATGTT. Residues Ile-191 and 196–198 each bind uracil; that span reads GDA. Asp-197 is a 5-phospho-alpha-D-ribose 1-diphosphate binding site.

This sequence belongs to the UPRTase family. Mg(2+) is required as a cofactor.

It catalyses the reaction UMP + diphosphate = 5-phospho-alpha-D-ribose 1-diphosphate + uracil. Its pathway is pyrimidine metabolism; UMP biosynthesis via salvage pathway; UMP from uracil: step 1/1. Its activity is regulated as follows. Allosterically activated by GTP. In terms of biological role, catalyzes the conversion of uracil and 5-phospho-alpha-D-ribose 1-diphosphate (PRPP) to UMP and diphosphate. This Mycoplasma genitalium (strain ATCC 33530 / DSM 19775 / NCTC 10195 / G37) (Mycoplasmoides genitalium) protein is Uracil phosphoribosyltransferase.